The sequence spans 561 residues: Putative transport protein YbjL (561 aa).

5 helical membrane-spanning segments follow: residues 8 to 28 (LLNG…LCLG), 32 to 52 (LGSI…LLGQ), 66 to 86 (FMLF…SIFF), 94 to 114 (MLAL…GKLF), and 158 to 178 (NLSL…IVGA). RCK C-terminal domains are found at residues 200 to 288 (RGLD…SFRN) and 292 to 373 (VFDR…RIGF). A run of 5 helical transmembrane segments spans residues 383 to 403 (LLAF…TFQF), 406 to 426 (FSFG…LGFM), 451 to 471 (VFMA…LGAI), 475 to 495 (MLIA…LFGA), and 540 to 560 (AIAN…WPGL).

The protein belongs to the AAE transporter (TC 2.A.81) family. YbjL subfamily.

The protein resides in the cell membrane. The sequence is that of Putative transport protein YbjL from Shigella sonnei (strain Ss046).